An 888-amino-acid chain; its full sequence is Interference hedgehog (888 aa).

The N-terminal stretch at 1-24 (MSLTRFSLCLLLTLLLAAIPVYLA) is a signal peptide. The Extracellular segment spans residues 25-688 (SPDPGVRILR…SHNETFNLNP (664 aa)). Ig-like C2-type domains are found at residues 28–123 (PGVR…ARLE), 134–215 (EGFK…VRLA), 234–321 (PHLL…SIQL), and 327–414 (PRIV…LQVN). 3 disulfides stabilise this stretch: cysteine 51/cysteine 106, cysteine 155/cysteine 203, and cysteine 257/cysteine 305. N-linked (GlcNAc...) asparagine glycosylation is found at asparagine 80, asparagine 185, asparagine 192, asparagine 281, asparagine 336, asparagine 365, asparagine 369, and asparagine 455. Cysteine 348 and cysteine 396 form a disulfide bridge. Fibronectin type-III domains follow at residues 450–557 (PPSA…LQRG) and 565–660 (VPSL…TQRP). Residues arginine 486 and lysine 493 each coordinate heparin. An N-linked (GlcNAc...) asparagine glycan is attached at asparagine 516. Arginine 531 lines the heparin pocket. Asparagine 547 is a glycosylation site (N-linked (GlcNAc...) asparagine). A compositionally biased stretch (polar residues) spans 655 to 667 (GRTQRPRVSTTTE). The tract at residues 655–679 (GRTQRPRVSTTTEPAVHAMDTTTPS) is disordered. Asparagine 681 carries an N-linked (GlcNAc...) asparagine glycan. A helical membrane pass occupies residues 689 to 709 (LLTGTIGGGALLVLLVVSACL). At 710-888 (CLCRRRSSRG…SSGSLNSVGV (179 aa)) the chain is on the cytoplasmic side. Disordered regions lie at residues 759 to 789 (AQQQQQQQQQQQQQQQQQHEEKDTQDNDMSY), 812 to 864 (SSSL…PGRV), and 869 to 888 (ARLSSRSENLSSGSLNSVGV). The segment covering 760–775 (QQQQQQQQQQQQQQQQ) has biased composition (low complexity). Positions 843–859 (QPTDGSTADSPRLQASN) are enriched in polar residues. Low complexity predominate over residues 872–888 (SSRSENLSSGSLNSVGV).

This sequence belongs to the immunoglobulin superfamily. IHOG family. As to quaternary structure, homodimer. Heterotetramer; 2 iHog chains bind 2 hh chains when facilitated by heparin, heparin is required to promote high-affinity interactions between hh and iHog.

It is found in the membrane. Functionally, mediates response to the active Hedgehog (Hh) protein signal in embryos, functioning upstream or at the level of patched (ptc). This Drosophila grimshawi (Hawaiian fruit fly) protein is Interference hedgehog.